The primary structure comprises 272 residues: 3-keto-5-aminohexanoate cleavage enzyme (272 aa).

Glu-15 is a (5S)-5-amino-3-oxohexanoate binding site. 2 residues coordinate Zn(2+): His-47 and His-49. 3 residues coordinate (5S)-5-amino-3-oxohexanoate: Ser-83, Gly-86, and Thr-107. Zn(2+) is bound at residue Glu-226.

This sequence belongs to the BKACE family. Kce subfamily. In terms of assembly, homotetramer. It depends on Zn(2+) as a cofactor.

The catalysed reaction is (5S)-5-amino-3-oxohexanoate + acetyl-CoA = (3S)-3-aminobutanoyl-CoA + acetoacetate. It functions in the pathway amino-acid degradation; L-lysine degradation via acetate pathway. Its activity is regulated as follows. 3-fold increase in activity by addition of 10 mM 2-mercaptoethanol. Addition of CoCl(2) and to a lesser extent MnCl(2) increases the activity but not MgCl(2). Inhibited by phosphate buffer but not by 5,5'-dithio-2-nitrobenzoic acid. Its function is as follows. Involved in the anaerobic fermentation of lysine. Catalyzes the reversible reaction between 3-keto-5-aminohexanoate (KAH) and acetyl-CoA to form 3-aminobutyryl-CoA and acetoacetate. The reaction involves the deprotonation of KAH, the nucleophilic addition onto acetyl-CoA and the intramolecular transfer of the CoA moiety. It can also use beta-alanyl-CoA as substrate. The polypeptide is 3-keto-5-aminohexanoate cleavage enzyme (Fusobacterium nucleatum subsp. nucleatum (strain ATCC 25586 / DSM 15643 / BCRC 10681 / CIP 101130 / JCM 8532 / KCTC 2640 / LMG 13131 / VPI 4355)).